A 465-amino-acid polypeptide reads, in one-letter code: Putrescine aminotransferase (465 aa).

Residues 150 to 151 (GT) and Q274 each bind pyridoxal 5'-phosphate. At K300 the chain carries N6-(pyridoxal phosphate)lysine. T332 lines the pyridoxal 5'-phosphate pocket.

This sequence belongs to the class-III pyridoxal-phosphate-dependent aminotransferase family. Putrescine aminotransferase subfamily. Pyridoxal 5'-phosphate is required as a cofactor.

It carries out the reaction an alkane-alpha,omega-diamine + 2-oxoglutarate = an omega-aminoaldehyde + L-glutamate. The enzyme catalyses putrescine + 2-oxoglutarate = 1-pyrroline + L-glutamate + H2O. It catalyses the reaction cadaverine + 2-oxoglutarate = 5-aminopentanal + L-glutamate. It participates in amine and polyamine degradation; putrescine degradation; 4-aminobutanal from putrescine (transaminase route): step 1/1. In terms of biological role, catalyzes the aminotransferase reaction from putrescine to 2-oxoglutarate, leading to glutamate and 4-aminobutanal, which spontaneously cyclizes to form 1-pyrroline. This is the first step in one of two pathways for putrescine degradation, where putrescine is converted into 4-aminobutanoate (gamma-aminobutyrate or GABA) via 4-aminobutanal. Also functions as a cadaverine transaminase in a a L-lysine degradation pathway to succinate that proceeds via cadaverine, glutarate and L-2-hydroxyglutarate. This chain is Putrescine aminotransferase, found in Cronobacter sakazakii (strain ATCC BAA-894) (Enterobacter sakazakii).